We begin with the raw amino-acid sequence, 179 residues long: Large ribosomal subunit protein uL6 (179 aa).

The protein belongs to the universal ribosomal protein uL6 family. In terms of assembly, part of the 50S ribosomal subunit.

This protein binds to the 23S rRNA, and is important in its secondary structure. It is located near the subunit interface in the base of the L7/L12 stalk, and near the tRNA binding site of the peptidyltransferase center. The sequence is that of Large ribosomal subunit protein uL6 from Crocosphaera subtropica (strain ATCC 51142 / BH68) (Cyanothece sp. (strain ATCC 51142)).